The primary structure comprises 112 residues: Tyrosine-protein phosphatase 7 (112 aa).

Positions 1 to 112 constitute a Tyrosine-protein phosphatase domain; the sequence is NNVTIIVMIT…SSPESGPIVV (112 aa). Aspartate 82 is a binding site for substrate.

Belongs to the protein-tyrosine phosphatase family.

It catalyses the reaction O-phospho-L-tyrosyl-[protein] + H2O = L-tyrosyl-[protein] + phosphate. The chain is Tyrosine-protein phosphatase 7 (STY-7) from Styela plicata (Wrinkled sea squirt).